We begin with the raw amino-acid sequence, 375 residues long: Metal tolerance protein B (375 aa).

Over 1–57 (MELEQICILKPDDEEEMESPSPSKTEENLGVVPLSCAFTRQEHCVSETKEREESTRR) the chain is Cytoplasmic. The chain crosses the membrane as a helical span at residues 58-78 (LSSLIFLYLIVMSVQIVGGFK). The Vacuolar portion of the chain corresponds to 79 to 84 (ANSLAV). Residues 85–105 (MTDAAHLLSDVAGLCVSLLAI) form a helical membrane-spanning segment. At 106–122 (KVSSWEANPRNSFGFKR) the chain is on the cytoplasmic side. The helical transmembrane segment at 123–143 (LEVLAAFLSVQLIWLVSGVII) threads the bilayer. Over 144–160 (HEAIQRLLSRSREVNGE) the chain is Vacuolar. A helical membrane pass occupies residues 161-181 (IMFGISAFGFFMNLVMVLWLG). Residues 182–206 (HNHSHHHHDHHHHHHNHKHQHQHHH) form a required for zinc-binding region. Over 182-240 (HNHSHHHHDHHHHHHNHKHQHQHHHKEVVAEEEEEEMNPLKGEKSSSKEMNINIQGAYL) the chain is Cytoplasmic. Residues 241–261 (HAMADMIQSLGVMIGGGIIWV) form a helical membrane-spanning segment. The Vacuolar portion of the chain corresponds to 262–264 (KPK). The chain crosses the membrane as a helical span at residues 265 to 285 (WVLVDLICTLVFSAFALAATL). Residues 286–375 (PILKNIFGIL…YHATVQVESE (90 aa)) lie on the Cytoplasmic side of the membrane.

It belongs to the cation diffusion facilitator (CDF) transporter (TC 2.A.4) family. SLC30A subfamily.

The protein resides in the vacuole membrane. Functionally, involved in sequestration of excess zinc in the cytoplasm into vacuoles to maintain zinc homeostasis. The chain is Metal tolerance protein B (MTPB) from Arabidopsis thaliana (Mouse-ear cress).